A 196-amino-acid polypeptide reads, in one-letter code: uncharacterized protein (196 aa).

The N-terminal stretch at 1–27 is a signal peptide; it reads MSVLSRAVQLAFVALGLCLFFSNLVAA.

The protein resides in the secreted. This is an uncharacterized protein from Arthroderma benhamiae (strain ATCC MYA-4681 / CBS 112371) (Trichophyton mentagrophytes).